Reading from the N-terminus, the 456-residue chain is RuvB-like 1 (456 aa).

Lys-2 is covalently cross-linked (Glycyl lysine isopeptide (Lys-Gly) (interchain with G-Cter in SUMO2)). 70 to 77 (GPPGTGKT) contacts ATP. Lys-225 is covalently cross-linked (Glycyl lysine isopeptide (Lys-Gly) (interchain with G-Cter in SUMO1); alternate). Residue Lys-225 forms a Glycyl lysine isopeptide (Lys-Gly) (interchain with G-Cter in SUMO2); alternate linkage. A Glycyl lysine isopeptide (Lys-Gly) (interchain with G-Cter in SUMO2) cross-link involves residue Lys-445. Position 453 is an N6-acetyllysine (Lys-453).

This sequence belongs to the RuvB family. Forms homohexameric rings. Can form a dodecamer with RUVBL2 made of two stacked hexameric rings; however, even though RUVBL1 and RUVBL2 are present in equimolar ratio, the oligomeric status of each hexamer is not known. Oligomerization may regulate binding to nucleic acids and conversely, binding to nucleic acids may affect the dodecameric assembly. Interaction of the complex with DHX34 results in conformational changes of the N-terminus of the RUVBL2 subunits, resulting in loss of nucleotide binding ability and ATP hydrolysis of the complex. Interacts with the transcriptional activation domain of MYC. Component of the RNA polymerase II holoenzyme complex. May also act to bridge the LEF1/TCF1-CTNNB1 complex and TBP. Component of the NuA4 histone acetyltransferase complex which contains the catalytic subunit KAT5/TIP60 and the subunits EP400, TRRAP/PAF400, BRD8/SMAP, EPC1, DMAP1/DNMAP1, RUVBL1/TIP49, RUVBL2, ING3, actin, ACTL6A/BAF53A, MORF4L1/MRG15, MORF4L2/MRGX, MRGBP, YEATS4/GAS41, VPS72/YL1 and MEAF6. The NuA4 complex interacts with MYC and the adenovirus E1A protein. RUVBL1 interacts with EP400. Component of a NuA4-related complex which contains EP400, TRRAP/PAF400, SRCAP, BRD8/SMAP, EPC1, DMAP1/DNMAP1, RUVBL1/TIP49, RUVBL2, actin, ACTL6A/BAF53A, VPS72 and YEATS4/GAS41. Component of the BAF53 complex, at least composed of ACTL6A/BAF53A, RUVBL1/TIP49, SMARCA2/BRM, and TRRAP/PAF400. Component of some MLL1/MLL complex, at least composed of the core components KMT2A/MLL1, ASH2L, HCFC1/HCF1, WDR5 and RBBP5, as well as the facultative components BACC1, CHD8, E2F6, HSP70, INO80C, KANSL1, LAS1L, MAX, MCRS1, MGA, MYST1/MOF, PELP1, PHF20, PRP31, RING2, RUVB1/TIP49A, RUVB2/TIP49B, SENP3, TAF1, TAF4, TAF6, TAF7, TAF9 and TEX10. Associates with alpha and gamma tubulins, particularly during metaphase and early anaphase. Interacts with NPAT. Component of the chromatin-remodeling INO80 complex; specifically part of a complex module associated with the helicase ATP-binding and the helicase C-terminal domain of INO80. Interacts with IGHMBP2. Interacts with OFD1. Interacts with HINT1. Component of a complex with USP49 and PSMC5. Component of a SWR1-like complex. Component of the R2TP complex composed at least of RUVBL1, RUVBL2, RPAP3 and PIHD1. Component of the PAQosome complex which is responsible for the biogenesis of several protein complexes and which consists of R2TP complex members RUVBL1, RUVBL2, RPAP3 and PIH1D1, URI complex members PFDN2, PFDN6, PDRG1, UXT and URI1 as well as ASDURF, POLR2E and DNAAF10/WDR92. Interacts with PIH1D1. Interacts with ITFG1. Interacts with WAC; WAC positively regulates MTOR activity by promoting the assembly of the TTT complex composed of TELO2, TTI1 and TTI2 and the RUVBL complex composed of RUVBL1 and RUVBL2 into the TTT-RUVBL complex which leads to the dimerization of the mTORC1 complex and its subsequent activation. The RUVBL1/RUVBL2 complex interacts with ZNHIT1 (via HIT-type zinc finger), ZNHIT3 (via HIT-type zinc finger), ZNHIT6 (via HIT-type zinc finger) and DDX59/ZNHIT5 (via HIT-type zinc finger) in the presence of ADP. Interacts with NOPCHAP1; the interaction is direct and disrupted upon ATP binding. Interacts with SMG1. Interacts with NOP2, NOP56 and NUFIP1.

It localises to the nucleus matrix. The protein resides in the nucleus. The protein localises to the nucleoplasm. Its subcellular location is the cytoplasm. It is found in the membrane. It localises to the cytoskeleton. The protein resides in the microtubule organizing center. The protein localises to the centrosome. Its subcellular location is the dynein axonemal particle. The catalysed reaction is ATP + H2O = ADP + phosphate + H(+). In terms of biological role, possesses single-stranded DNA-stimulated ATPase and ATP-dependent DNA helicase (3' to 5') activity; hexamerization is thought to be critical for ATP hydrolysis and adjacent subunits in the ring-like structure contribute to the ATPase activity. Component of the NuA4 histone acetyltransferase complex which is involved in transcriptional activation of select genes principally by acetylation of nucleosomal histones H4 and H2A. This modification may both alter nucleosome-DNA interactions and promote interaction of the modified histones with other proteins which positively regulate transcription. This complex may be required for the activation of transcriptional programs associated with oncogene and proto-oncogene mediated growth induction, tumor suppressor mediated growth arrest and replicative senescence, apoptosis, and DNA repair. The NuA4 complex ATPase and helicase activities seem to be, at least in part, contributed by the association of RUVBL1 and RUVBL2 with EP400. NuA4 may also play a direct role in DNA repair when recruited to sites of DNA damage. Component of a SWR1-like complex that specifically mediates the removal of histone H2A.Z/H2AZ1 from the nucleosome. Proposed core component of the chromatin remodeling INO80 complex which exhibits DNA- and nucleosome-activated ATPase activity and catalyzes ATP-dependent nucleosome sliding. Plays an essential role in oncogenic transformation by MYC and also modulates transcriptional activation by the LEF1/TCF1-CTNNB1 complex. Essential for cell proliferation. May be able to bind plasminogen at cell surface and enhance plasminogen activation. In Mus musculus (Mouse), this protein is RuvB-like 1 (Ruvbl1).